Here is a 558-residue protein sequence, read N- to C-terminus: MTSLTQNRYFQKLQDWHRDNSADINLRSLFDADPERFNNFSLNLNTTHGHILVDYSKNLVNKEVMQMLVDLARSRGVETMRDNMFSGVKINYTEDRAVLHVALRNRSNSPIVVDSRDVMPEVNRVLEKMRSFCQRVRSGEWKGYSGKPITDIVNIGIGGSDLGPLMVTEALKPYASGGPRIWFVSNIDGTHIAKTLANLTPESSLFIVASKTFTTQETITNAETAKEWFLGASRDPSTVAKHFIALSTNTSKVKEFGIDPQNMFEFWDWVGGRYSLWSAIGLSIALHIGFDNFEQLLSGAHWMDQHFRKTPLEKNAPVLLALLGIWYINFYGCETHALLPYDQYMHRFAAYFQQGDMESNGKSITRSGTRVDHHTGPIVWGEPGTNGQHAFYQLIHQGTKMIPCDFLIPVQTQHPIRKGLHHKILLANFLAQTEALMKGKSNEEAKKELQAAGKSPEDLEKLLPHKVFEGNRPTNSIVFTKLTPFILGALIALYEHKIFVQGVIWDINSFDQWGVELGKQLAKNIEPELDGSAPVTSHDSSTNGLIKFIKQQRDIRIE.

Position 12 is an N6-acetyllysine (Lys12). A phosphoserine mark is found at Ser86 and Ser107. Position 142 is an N6-acetyllysine (Lys142). Gly159–Ser160 lines the D-glucose 6-phosphate pocket. Ser185 is subject to Phosphoserine; by CK2. Ser210–Thr215 contacts D-glucose 6-phosphate. At Thr250 the chain carries Phosphothreonine. The D-glucose 6-phosphate site is built by Gln354, Glu358, and His389. Catalysis depends on Glu358, which acts as the Proton donor. His389 is an active-site residue. The residue at position 454 (Lys454) is an N6-acetyllysine; alternate. At Lys454 the chain carries N6-malonyllysine; alternate. At Lys454 the chain carries N6-succinyllysine; alternate. A Phosphoserine modification is found at Ser455. D-glucose 6-phosphate is bound at residue Lys519. Residue Lys519 is part of the active site.

This sequence belongs to the GPI family. In terms of assembly, homodimer; in the catalytically active form. Monomer in the secreted form. Phosphorylation at Ser-185 by CK2 has been shown to decrease enzymatic activity and may contribute to secretion by a non-classical secretory pathway. Post-translationally, ISGylated.

It localises to the cytoplasm. Its subcellular location is the secreted. It catalyses the reaction alpha-D-glucose 6-phosphate = beta-D-fructose 6-phosphate. Its pathway is carbohydrate degradation; glycolysis; D-glyceraldehyde 3-phosphate and glycerone phosphate from D-glucose: step 2/4. In terms of biological role, in the cytoplasm, catalyzes the conversion of glucose-6-phosphate to fructose-6-phosphate, the second step in glycolysis, and the reverse reaction during gluconeogenesis. Besides it's role as a glycolytic enzyme, also acts as a secreted cytokine: acts as an angiogenic factor (AMF) that stimulates endothelial cell motility. Acts as a neurotrophic factor, neuroleukin, for spinal and sensory neurons. It is secreted by lectin-stimulated T-cells and induces immunoglobulin secretion. The chain is Glucose-6-phosphate isomerase from Cricetulus griseus (Chinese hamster).